The following is a 368-amino-acid chain: D-alanine--D-alanine ligase (368 aa).

Residues 151 to 358 (KKLLAAEGLP…YRTLISTLVD (208 aa)) enclose the ATP-grasp domain. 179–234 (KAELGLPVFVKPARGGSSIGITRVSNWDGLDGAIAHARLHDPKVIVEGAIIGREVE) contacts ATP. Positions 313, 325, and 327 each coordinate Mg(2+).

Belongs to the D-alanine--D-alanine ligase family. It depends on Mg(2+) as a cofactor. Mn(2+) serves as cofactor.

The protein localises to the cytoplasm. The enzyme catalyses 2 D-alanine + ATP = D-alanyl-D-alanine + ADP + phosphate + H(+). The protein operates within cell wall biogenesis; peptidoglycan biosynthesis. Functionally, cell wall formation. The protein is D-alanine--D-alanine ligase of Rhodococcus erythropolis (strain PR4 / NBRC 100887).